Here is a 519-residue protein sequence, read N- to C-terminus: Glycogen synthase (519 aa).

The interval 1–40 (MISAAVEPHVDAFKPDNREPLTPDFATTGKAPGAQRQHNP) is disordered. Residues 8-21 (PHVDAFKPDNREPL) show a composition bias toward basic and acidic residues. Residue Lys57 coordinates ADP-alpha-D-glucose.

It belongs to the glycosyltransferase 1 family. Bacterial/plant glycogen synthase subfamily.

The enzyme catalyses [(1-&gt;4)-alpha-D-glucosyl](n) + ADP-alpha-D-glucose = [(1-&gt;4)-alpha-D-glucosyl](n+1) + ADP + H(+). The protein operates within glycan biosynthesis; glycogen biosynthesis. Its function is as follows. Synthesizes alpha-1,4-glucan chains using ADP-glucose. This is Glycogen synthase from Pseudomonas putida (strain ATCC 47054 / DSM 6125 / CFBP 8728 / NCIMB 11950 / KT2440).